The chain runs to 947 residues: Protein translocase subunit SecA 1 (947 aa).

ATP is bound by residues Gln83, 101-105, and Asp490; that span reads GEGKT. Positions 860–947 are disordered; that stretch reads AKAQEQTGQG…KTSKPTRRRG (88 aa). The span at 925-934 shows a compositional bias: basic and acidic residues; the sequence is TRRERREAAR. Basic residues predominate over residues 935-947; the sequence is KQAKTSKPTRRRG.

Belongs to the SecA family. In terms of assembly, monomer and homodimer. Part of the essential Sec protein translocation apparatus which comprises SecA, SecYEG and auxiliary proteins SecDF. Other proteins may also be involved.

The protein localises to the cell membrane. It localises to the cytoplasm. The catalysed reaction is ATP + H2O + cellular proteinSide 1 = ADP + phosphate + cellular proteinSide 2.. Functionally, part of the Sec protein translocase complex. Interacts with the SecYEG preprotein conducting channel. Has a central role in coupling the hydrolysis of ATP to the transfer of proteins into and across the cell membrane, serving as an ATP-driven molecular motor driving the stepwise translocation of polypeptide chains across the membrane. The polypeptide is Protein translocase subunit SecA 1 (Mycobacterium sp. (strain JLS)).